We begin with the raw amino-acid sequence, 98 residues long: Small ribosomal subunit protein uS19 (98 aa).

This sequence belongs to the universal ribosomal protein uS19 family.

Protein S19 forms a complex with S13 that binds strongly to the 16S ribosomal RNA. The sequence is that of Small ribosomal subunit protein uS19 from Chlorobaculum tepidum (strain ATCC 49652 / DSM 12025 / NBRC 103806 / TLS) (Chlorobium tepidum).